We begin with the raw amino-acid sequence, 69 residues long: UPF0337 protein RB0906 (69 aa).

This sequence belongs to the UPF0337 (CsbD) family.

In Rhizobium meliloti (strain 1021) (Ensifer meliloti), this protein is UPF0337 protein RB0906.